We begin with the raw amino-acid sequence, 338 residues long: Ketol-acid reductoisomerase (NADP(+)) (338 aa).

The KARI N-terminal Rossmann domain occupies 1–181 (MKVYYDSDAD…GGGRAGIIET (181 aa)). Residues 24–27 (YGSQ), Arg47, Ser50, Ser52, and 82–85 (DEHQ) contribute to the NADP(+) site. Residue His107 is part of the active site. Gly133 contributes to the NADP(+) binding site. The KARI C-terminal knotted domain maps to 182–327 (SFKEETETDL…AKLRAMMPWI (146 aa)). Mg(2+)-binding residues include Asp190, Glu194, Glu226, and Glu230. Ser251 is a binding site for substrate.

This sequence belongs to the ketol-acid reductoisomerase family. The cofactor is Mg(2+).

It catalyses the reaction (2R)-2,3-dihydroxy-3-methylbutanoate + NADP(+) = (2S)-2-acetolactate + NADPH + H(+). It carries out the reaction (2R,3R)-2,3-dihydroxy-3-methylpentanoate + NADP(+) = (S)-2-ethyl-2-hydroxy-3-oxobutanoate + NADPH + H(+). Its pathway is amino-acid biosynthesis; L-isoleucine biosynthesis; L-isoleucine from 2-oxobutanoate: step 2/4. The protein operates within amino-acid biosynthesis; L-valine biosynthesis; L-valine from pyruvate: step 2/4. Functionally, involved in the biosynthesis of branched-chain amino acids (BCAA). Catalyzes an alkyl-migration followed by a ketol-acid reduction of (S)-2-acetolactate (S2AL) to yield (R)-2,3-dihydroxy-isovalerate. In the isomerase reaction, S2AL is rearranged via a Mg-dependent methyl migration to produce 3-hydroxy-3-methyl-2-ketobutyrate (HMKB). In the reductase reaction, this 2-ketoacid undergoes a metal-dependent reduction by NADPH to yield (R)-2,3-dihydroxy-isovalerate. The protein is Ketol-acid reductoisomerase (NADP(+)) of Magnetococcus marinus (strain ATCC BAA-1437 / JCM 17883 / MC-1).